The following is a 290-amino-acid chain: 4-hydroxybenzoate octaprenyltransferase (290 aa).

Helical transmembrane passes span 41–61, 89–109, 133–153, 158–178, 202–224, and 269–289; these read WPLL…GCAM, WEAV…IQPL, FFAI…PMAF, DTVP…SVAY, FGRF…YVWI, and WLGG…GTAG.

It belongs to the UbiA prenyltransferase family. Requires Mg(2+) as cofactor.

The protein resides in the cell inner membrane. The catalysed reaction is all-trans-octaprenyl diphosphate + 4-hydroxybenzoate = 4-hydroxy-3-(all-trans-octaprenyl)benzoate + diphosphate. The protein operates within cofactor biosynthesis; ubiquinone biosynthesis. Catalyzes the prenylation of para-hydroxybenzoate (PHB) with an all-trans polyprenyl group. Mediates the second step in the final reaction sequence of ubiquinone-8 (UQ-8) biosynthesis, which is the condensation of the polyisoprenoid side chain with PHB, generating the first membrane-bound Q intermediate 3-octaprenyl-4-hydroxybenzoate. This is 4-hydroxybenzoate octaprenyltransferase from Burkholderia ambifaria (strain ATCC BAA-244 / DSM 16087 / CCUG 44356 / LMG 19182 / AMMD) (Burkholderia cepacia (strain AMMD)).